The following is a 226-amino-acid chain: Large ribosomal subunit protein uL1 (226 aa).

The protein belongs to the universal ribosomal protein uL1 family. Part of the 50S ribosomal subunit.

In terms of biological role, binds directly to 23S rRNA. The L1 stalk is quite mobile in the ribosome, and is involved in E site tRNA release. Functionally, protein L1 is also a translational repressor protein, it controls the translation of the L11 operon by binding to its mRNA. The sequence is that of Large ribosomal subunit protein uL1 from Mycoplasma mycoides subsp. mycoides SC (strain CCUG 32753 / NCTC 10114 / PG1).